Reading from the N-terminus, the 203-residue chain is MRVVVPFSATEPKTRLAPVLDADERRAFARVMLADVLDALDTVGVDPTVLATEAIDLDRPVTVDDRPLDAAINGLLAASDEPVAVVMADLALATPDALDRLFAAEGDVVLAPGRGGGTNAFVARHPDFRVDYHDASIRDHRRIARDAGGTVTEIDSYRLSTDVDEPADLAEVLLHGEGRAADWLRGAGVQLTVADGRTTVERP.

The protein belongs to the CofC family. In terms of assembly, homodimer.

The enzyme catalyses (2S)-2-phospholactate + GTP + H(+) = (2S)-lactyl-2-diphospho-5'-guanosine + diphosphate. Its pathway is cofactor biosynthesis; coenzyme F420 biosynthesis. Guanylyltransferase that catalyzes the activation of (2S)-2-phospholactate (2-PL) as (2S)-lactyl-2-diphospho-5'-guanosine, via the condensation of 2-PL with GTP. It is involved in the biosynthesis of coenzyme F420, a hydride carrier cofactor. This is 2-phospho-L-lactate guanylyltransferase from Halomicrobium mukohataei (strain ATCC 700874 / DSM 12286 / JCM 9738 / NCIMB 13541) (Haloarcula mukohataei).